Here is a 181-residue protein sequence, read N- to C-terminus: HGPRTase-like protein 2 (181 aa).

This sequence belongs to the purine/pyrimidine phosphoribosyltransferase family. Archaeal HPRT subfamily.

Its function is as follows. May catalyze a purine salvage reaction, the substrate is unknown. This is HGPRTase-like protein 2 from Haloferax volcanii (strain ATCC 29605 / DSM 3757 / JCM 8879 / NBRC 14742 / NCIMB 2012 / VKM B-1768 / DS2) (Halobacterium volcanii).